The following is a 191-amino-acid chain: Crossover junction endodeoxyribonuclease RuvC (191 aa).

Active-site residues include aspartate 7, glutamate 67, and aspartate 140. Positions 7, 67, and 140 each coordinate Mg(2+).

The protein belongs to the RuvC family. Homodimer which binds Holliday junction (HJ) DNA. The HJ becomes 2-fold symmetrical on binding to RuvC with unstacked arms; it has a different conformation from HJ DNA in complex with RuvA. In the full resolvosome a probable DNA-RuvA(4)-RuvB(12)-RuvC(2) complex forms which resolves the HJ. Requires Mg(2+) as cofactor.

It is found in the cytoplasm. The enzyme catalyses Endonucleolytic cleavage at a junction such as a reciprocal single-stranded crossover between two homologous DNA duplexes (Holliday junction).. Its function is as follows. The RuvA-RuvB-RuvC complex processes Holliday junction (HJ) DNA during genetic recombination and DNA repair. Endonuclease that resolves HJ intermediates. Cleaves cruciform DNA by making single-stranded nicks across the HJ at symmetrical positions within the homologous arms, yielding a 5'-phosphate and a 3'-hydroxyl group; requires a central core of homology in the junction. The consensus cleavage sequence is 5'-(A/T)TT(C/G)-3'. Cleavage occurs on the 3'-side of the TT dinucleotide at the point of strand exchange. HJ branch migration catalyzed by RuvA-RuvB allows RuvC to scan DNA until it finds its consensus sequence, where it cleaves and resolves the cruciform DNA. The sequence is that of Crossover junction endodeoxyribonuclease RuvC from Pelodictyon phaeoclathratiforme (strain DSM 5477 / BU-1).